Reading from the N-terminus, the 575-residue chain is Chaperonin 60 subunit alpha 2, chloroplastic (575 aa).

Over residues 1 to 18 (MFAVSPSSFSPTTISPRR) the composition is skewed to low complexity. The tract at residues 1–27 (MFAVSPSSFSPTTISPRRSGQRNEPRK) is disordered. Residues 1 to 32 (MFAVSPSSFSPTTISPRRSGQRNEPRKFSVVR) constitute a chloroplast transit peptide.

It belongs to the chaperonin (HSP60) family. Part of the Cpn60 complex composed of 7 alpha and 7 beta subunits.

The protein resides in the plastid. Its subcellular location is the chloroplast. Functionally, involved in protein assisted folding. This Arabidopsis thaliana (Mouse-ear cress) protein is Chaperonin 60 subunit alpha 2, chloroplastic (CPN60A2).